The primary structure comprises 202 residues: ATP-dependent Clp protease proteolytic subunit (202 aa).

S106 serves as the catalytic Nucleophile. H131 is a catalytic residue.

Belongs to the peptidase S14 family. In terms of assembly, fourteen ClpP subunits assemble into 2 heptameric rings which stack back to back to give a disk-like structure with a central cavity, resembling the structure of eukaryotic proteasomes.

The protein localises to the cytoplasm. The enzyme catalyses Hydrolysis of proteins to small peptides in the presence of ATP and magnesium. alpha-casein is the usual test substrate. In the absence of ATP, only oligopeptides shorter than five residues are hydrolyzed (such as succinyl-Leu-Tyr-|-NHMec, and Leu-Tyr-Leu-|-Tyr-Trp, in which cleavage of the -Tyr-|-Leu- and -Tyr-|-Trp bonds also occurs).. Its function is as follows. Cleaves peptides in various proteins in a process that requires ATP hydrolysis. Has a chymotrypsin-like activity. Plays a major role in the degradation of misfolded proteins. This is ATP-dependent Clp protease proteolytic subunit from Shewanella sp. (strain MR-7).